The sequence spans 308 residues: U-box domain-containing protein 54 (308 aa).

The tract at residues 172–235 (FSEFSTSAEK…NESDEDPRLE (64 aa)) is disordered. Over residues 210–227 (ESPKKGRKETIEKSKSNE) the composition is skewed to basic and acidic residues. One can recognise a U-box domain in the interval 232-306 (PRLEDFKCPI…KDWLEKNPNY (75 aa)).

The enzyme catalyses S-ubiquitinyl-[E2 ubiquitin-conjugating enzyme]-L-cysteine + [acceptor protein]-L-lysine = [E2 ubiquitin-conjugating enzyme]-L-cysteine + N(6)-ubiquitinyl-[acceptor protein]-L-lysine.. The protein operates within protein modification; protein ubiquitination. In terms of biological role, functions as an E3 ubiquitin ligase. In Arabidopsis thaliana (Mouse-ear cress), this protein is U-box domain-containing protein 54 (PUB54).